The primary structure comprises 464 residues: D-2-hydroxyglutarate dehydrogenase (464 aa).

An FAD-binding PCMH-type domain is found at 37–216 (FAPAPSAIVF…VEATMRLERQ (180 aa)). Residues R325, S329, and K339 each coordinate (R)-2-hydroxyglutarate. Positions 325, 329, and 339 each coordinate (R)-malate. Residues H374 and H381 each contribute to the Zn(2+) site. N383 contacts (R)-2-hydroxyglutarate. A Zn(2+)-binding site is contributed by E420. H421 serves as a coordination point for (R)-2-hydroxyglutarate. Residue H421 participates in (R)-malate binding.

This sequence belongs to the FAD-binding oxidoreductase/transferase type 4 family. As to quaternary structure, homodimer. The cofactor is FAD.

It carries out the reaction (R)-2-hydroxyglutarate + A = 2-oxoglutarate + AH2. The enzyme catalyses (R)-malate + A = oxaloacetate + AH2. With respect to regulation, activated by Zn(2+) ions at low concentrations (10 uM) and inhibited by Zn(2+), Fe(2+) and Ni(2+) at high concentrations (10 mM). Its function is as follows. Catalyzes the dehydrogenation of (R)-2-hydroxyglutarate (D-2-hydroxyglutarate or D-2-HG) to 2-oxoglutarate and of (R)-malate (D-malate) to oxaloacetate. Is functionally tied to L-serine biosynthesis, via its coupling with the D-3-phosphoglycerate dehydrogenase SerA, encoded by the adjacent gene in the locus. Is required for the utilization of D-2-hydroxyglutarate as well as D-malate as the sole carbon source for growth of P.stutzeri. Active in vitro with artificial electron acceptors such as 2,6-dichlorophenolindophenol (DCPIP) and appears to couple with electron transfer flavoprotein (ETF) for efficient oxidation of both D-2-hydroxyglutarate and D-malate in vivo. Cannot catalyze the oxidation of L-2-hydroxyglutarate, D-lactate, D-tartrate, D-2-hydroxybutanoate, D-mandelate, D-glycerate and D-phenyllactate. This is D-2-hydroxyglutarate dehydrogenase from Stutzerimonas stutzeri (strain A1501) (Pseudomonas stutzeri).